Consider the following 734-residue polypeptide: MKAYAFGFPKIGEKREFKKALEDFWKGKITEEQFEEEMNKLRMYMVENYRKNVDVIPSNELSYYDFVLDTAVMVGAVPERFGEYRGLSTYFDMARGGKALEMTKFFNTNYHYLVPEIETEEFYLLENKPLEDYLFFKSKGIETAPWVIGPFTFLYLSKRNGEWIRRPNQMEKLLESLVSVYKEVFEKLVENGCKEILVNEPAFVCDLEKAHWDLILNVYRELSEFPLTVFTYYDSVSDYEACVSLPVKRLHFDFVSNEENLKNLEKHGFPEDKKLVAGVINGRQPWKVDLRKVASLVEKLGASAISNSCPLFHLPVTLELENNLPGGLKEKLAFAKEKLEELKMLKDFLEGKTFDLPNVSFEDFAVDLQAVERVRNLPEDSFRREKEYTERDRIQRERLNLPLFPTTTIGSFPQTPEVRKMRSKYRKGEISKEEYEAFIKEQIKKAIELQEEIGLDVLVHGEFERTDMVEFFAEKLNGIATTQNGWVLSYGSRCYRPPIIYGTVTRPEPMTLKEITYAQSLTEKPVKGMLTGPVTIMSWSYYREDIPEREIAYQIALAINEEVKDLEEAGIKIVQIDEPAFREKAPIKKSKWPEYFEWAINAFNLAANARPETQIHAHMCYSDFNEIIEYIHQLEFDVISIEASRSKGEIISAFENFKGWIKQIGVGVWDIHSPAVPSINEMREIVERVLRVLPKELIWINPDCGLKTRNWDEVIPSLRNMVALAKEMREKFES.

Residues 15 to 18 (REFK) and Lys-104 contribute to the 5-methyltetrahydropteroyltri-L-glutamate site. L-homocysteine-binding positions include 409-411 (IGS) and Glu-462. Residues 409-411 (IGS) and Glu-462 each bind L-methionine. 5-methyltetrahydropteroyltri-L-glutamate contacts are provided by residues 493–494 (RC) and Trp-539. Asp-577 is a binding site for L-homocysteine. Asp-577 lines the L-methionine pocket. Residue Glu-583 coordinates 5-methyltetrahydropteroyltri-L-glutamate. 3 residues coordinate Zn(2+): His-618, Cys-620, and Glu-642. The Proton donor role is filled by His-672. Residue Cys-704 participates in Zn(2+) binding.

This sequence belongs to the vitamin-B12 independent methionine synthase family. The cofactor is Zn(2+).

The enzyme catalyses 5-methyltetrahydropteroyltri-L-glutamate + L-homocysteine = tetrahydropteroyltri-L-glutamate + L-methionine. Its pathway is amino-acid biosynthesis; L-methionine biosynthesis via de novo pathway; L-methionine from L-homocysteine (MetE route): step 1/1. In terms of biological role, catalyzes the transfer of a methyl group from 5-methyltetrahydrofolate to homocysteine resulting in methionine formation. The polypeptide is 5-methyltetrahydropteroyltriglutamate--homocysteine methyltransferase (Thermotoga maritima (strain ATCC 43589 / DSM 3109 / JCM 10099 / NBRC 100826 / MSB8)).